Reading from the N-terminus, the 184-residue chain is ADP-ribosylation factor-like protein 2 (184 aa).

Gly2 carries the N-myristoyl glycine lipid modification. Residue 23 to 30 (GLDNAGKT) coordinates GTP. The residue at position 45 (Ser45) is a Phosphoserine. GTP-binding positions include 66-70 (DVGGQ) and Gly68. A Glycyl lysine isopeptide (Lys-Gly) (interchain with G-Cter in ubiquitin) cross-link involves residue Lys71. A GTP-binding site is contributed by 125–128 (NKQD).

The protein belongs to the small GTPase superfamily. Arf family. Found in a complex with ARL2, ARL2BP and SLC25A6. Found in a complex with at least ARL2, PPP2CB, PPP2R1A, PPP2R2A, PPP2R5E and TBCD. Interacts with ELMOD2. The GTP-bound form interacts with ARL2BP. The GDP-bound form interacts preferentially with TBCD. Interacts with UNC119. Found in a complex with ARL2, ARL2BP and SLC25A4. The GTP-bound form interacts with PDE6D. Post-translationally, not N-myristoylated. Expressed in brain, retina, lung, cerebellum, liver, kidney, hippocampus, spleen, cortex and heart (at protein level).

It is found in the mitochondrion intermembrane space. It localises to the cytoplasm. The protein resides in the cytoskeleton. The protein localises to the microtubule organizing center. Its subcellular location is the centrosome. It is found in the nucleus. In terms of biological role, small GTP-binding protein which cycles between an inactive GDP-bound and an active GTP-bound form, and the rate of cycling is regulated by guanine nucleotide exchange factors (GEF) and GTPase-activating proteins (GAP). GTP-binding protein that does not act as an allosteric activator of the cholera toxin catalytic subunit. Regulates formation of new microtubules and centrosome integrity. Prevents the TBCD-induced microtubule destruction. Participates in association with TBCD, in the disassembly of the apical junction complexes. Antagonizes the effect of TBCD on epithelial cell detachment and tight and adherens junctions disassembly. Together with ARL2, plays a role in the nuclear translocation, retention and transcriptional activity of STAT3. Component of a regulated secretory pathway involved in Ca(2+)-dependent release of acetylcholine. Required for normal progress through the cell cycle. This Rattus norvegicus (Rat) protein is ADP-ribosylation factor-like protein 2 (Arl2).